The chain runs to 176 residues: Large ribosomal subunit protein uL10 (176 aa).

This sequence belongs to the universal ribosomal protein uL10 family. Part of the ribosomal stalk of the 50S ribosomal subunit. The N-terminus interacts with L11 and the large rRNA to form the base of the stalk. The C-terminus forms an elongated spine to which L12 dimers bind in a sequential fashion forming a multimeric L10(L12)X complex.

In terms of biological role, forms part of the ribosomal stalk, playing a central role in the interaction of the ribosome with GTP-bound translation factors. This is Large ribosomal subunit protein uL10 from Dehalococcoides mccartyi (strain ATCC BAA-2100 / JCM 16839 / KCTC 5957 / BAV1).